Reading from the N-terminus, the 115-residue chain is Autophagy-related protein 8i (115 aa).

Gly115 carries the Phosphatidylethanolamine amidated glycine lipid modification.

The protein belongs to the ATG8 family. In terms of assembly, interacts with ATG4. Interacts with NBR1. Post-translationally, gly-115 forms then a thioester bond with the 'Cys-558' of ATG7 (E1-like activating enzyme) before being transferred to the 'Cys-258' of ATG3 (the specific E2 conjugating enzyme), in order to be finally amidated with phosphatidylethanolamine. This lipid modification anchors ATG8 to autophagosomes. In terms of tissue distribution, constitutively expressed.

It localises to the cytoplasmic vesicle. The protein resides in the autophagosome membrane. Its subcellular location is the vacuole membrane. It is found in the cytoplasm. The protein localises to the cytoskeleton. Functionally, ubiquitin-like modifier involved in autophagosomes formation. May mediate the delivery of the autophagosomes to the vacuole via the microtubule cytoskeleton. This chain is Autophagy-related protein 8i (ATG8I), found in Arabidopsis thaliana (Mouse-ear cress).